The sequence spans 238 residues: Calmodulin-binding protein 25 (238 aa).

Over residues 68–78 (STNTLSSTVSG) the composition is skewed to polar residues. The segment at 68 to 87 (STNTLSSTVSGASDPEIIGG) is disordered. Residues 92–108 (KRNCLLTDGKAAKRRAR) carry the Bipartite nuclear localization signal motif. The VQ signature appears at 125–134 (FRQMVQQVTG). Residues 201–220 (SSVGLPSGKPSATADPGGSA) are disordered.

As to quaternary structure, interacts with calmodulin (CaM). Interacts with WRKY25 and WRKY51. In terms of tissue distribution, expressed in leaves, flowers and siliques.

The protein localises to the nucleus. Its function is as follows. Calmodulin-binding protein that functions as a negative regulator of osmotic stress tolerance. This chain is Calmodulin-binding protein 25, found in Arabidopsis thaliana (Mouse-ear cress).